The chain runs to 801 residues: Protein SDA1 homolog (801 aa).

Disordered stretches follow at residues 1-40 (MGKV…ASRF), 495-517 (RKDR…FARP), 536-647 (GEQG…SKNS), and 739-801 (DYKF…RKPQ). Polar residues predominate over residues 24-40 (KSNAPTEGSNSGKASRF). Acidic residues-rich tracts occupy residues 544–568 (DGTD…DADE) and 583–633 (NDAE…EASE). 2 stretches are compositionally biased toward basic residues: residues 770–779 (NKIRGRNRQR) and 787–801 (SLRH…RKPQ).

It belongs to the SDA1 family.

Its subcellular location is the nucleus. Its function is as follows. Required for 60S pre-ribosomal subunits export to the cytoplasm. Required for normal somatic gonad development and for regulation of germline development and proliferation. In Caenorhabditis elegans, this protein is Protein SDA1 homolog (pro-3).